The primary structure comprises 309 residues: Zinc finger protein-like 1 homolog (309 aa).

The B box-type; degenerate zinc finger occupies 1 to 43 (MGLCKCPKRKVTNLFCYEHRVNVCEFCLVDNHPNCVVQSYLTW). The RING-type; atypical zinc finger occupies 53–101 (CSLCKTTLAEGDTIRLNCLHLLHWKCFDEWAANFPATTAPAGYRCPCCS). The disordered stretch occupies residues 200-221 (GAESSSDTRPLLQLRDADNEEN). Residues 254–274 (KIALFVIFLAVLALITIIMVM) traverse the membrane as a helical segment.

It belongs to the ZFPL1 family.

It localises to the membrane. In Caenorhabditis elegans, this protein is Zinc finger protein-like 1 homolog.